A 760-amino-acid chain; its full sequence is E4 SUMO-protein ligase PIAL2 (760 aa).

The tract at residues 143 to 301 is interacting domain (IND), required for interaction with MOM1 and PIAL1; the sequence is IKSPGSTFSQ…GVIEASPDSD (159 aa). The SP-RING-type zinc-finger motif lies at 298–379; sequence PDSDIIEGPS…MAKILKDVEH (82 aa). Positions 329, 331, 352, and 355 each coordinate Zn(2+). Basic and acidic residues predominate over residues 440–450; that stretch reads GDNKVEDRKPC. Disordered stretches follow at residues 440 to 471, 492 to 522, 631 to 657, and 699 to 760; these read GDNK…SNDD, LGNT…MSID, GVRG…SVSR, and SQQS…GPTS. Composition is skewed to polar residues over residues 492-518, 631-653, and 699-729; these read LGNT…SQIP, GVRG…PTVQ, and SQQS…SPFT.

The protein belongs to the PIAL protein ligase family. As to quaternary structure, homodimer. Interacts with MOM1 and PIAL1 to form a high molecular mass complex which mediates transcriptional silencing at heterochromatin regions. As to expression, expressed in leaves, stems and flowers, and, at low levels, in siliques and old leaves.

The protein resides in the nucleus. Its pathway is protein modification; protein sumoylation. Functionally, together with MOM1 and PIAL1, regulates transcriptional gene silencing (TGS) independently of changes in DNA methylation. E4-type SUMO ligase that promotes SUMO chain formation in a SCE1-dependent manner and thus contributes to a pathway for proteolytic removal of sumoylation substrates. Involved in stress responses and sulfur metabolism. This Arabidopsis thaliana (Mouse-ear cress) protein is E4 SUMO-protein ligase PIAL2.